The chain runs to 579 residues: Probable receptor-like serine/threonine-protein kinase At5g57670 (579 aa).

A Phosphothreonine modification is found at Thr-256. The region spanning 267–542 (FHQGNIVGIG…LLTNGNEAEI (276 aa)) is the Protein kinase domain. ATP is bound by residues 273–281 (VGIGGYSEV) and Lys-295. Asp-392 acts as the Proton acceptor in catalysis. Ser-396 carries the post-translational modification Phosphoserine. Thr-432 carries the post-translational modification Phosphothreonine.

It belongs to the protein kinase superfamily. Ser/Thr protein kinase family.

It catalyses the reaction L-seryl-[protein] + ATP = O-phospho-L-seryl-[protein] + ADP + H(+). It carries out the reaction L-threonyl-[protein] + ATP = O-phospho-L-threonyl-[protein] + ADP + H(+). This Arabidopsis thaliana (Mouse-ear cress) protein is Probable receptor-like serine/threonine-protein kinase At5g57670.